Reading from the N-terminus, the 692-residue chain is Chaperone protein dnaK1 (692 aa).

T197 bears the Phosphothreonine; by autocatalysis mark.

It belongs to the heat shock protein 70 family.

In terms of biological role, acts as a chaperone. This is Chaperone protein dnaK1 (dnaK1) from Synechocystis sp. (strain ATCC 27184 / PCC 6803 / Kazusa).